The following is a 758-amino-acid chain: Vitamin K-dependent gamma-carboxylase (758 aa).

The interval 1-22 (MAVSAGSARTSPSSDKVQKDKA) is disordered. Alanine 2 bears the N-acetylalanine mark. Over 2 to 60 (AVSAGSARTSPSSDKVQKDKAELISGPRQDSRIGKLLGFEWTDLSSWRRLVTLLNRPTD) the chain is Cytoplasmic. Residues 61–81 (PASLAVFRFLFGFLMVLDIPQ) traverse the membrane as a helical segment. The Lumenal portion of the chain corresponds to 82-113 (ERGLSSLDRKYLDGLDVCRFPLLDALRPLPLD). Residues cysteine 99 and cysteine 450 are joined by a disulfide bond. A helical membrane pass occupies residues 114-134 (WMYLVYTIMFLGALGMMLGLC). Residues 135-136 (YR) are Cytoplasmic-facing. A helical transmembrane segment spans residues 137–157 (ISCVLFLLPYWYVFLLDKTSW). At 158–292 (NNHSYLYGLL…VSYFHCMNSQ (135 aa)) the chain is on the lumenal side. Lysine 218 functions as the Proton acceptor in the catalytic mechanism. Residues 293–313 (LFSIGMFSYVMLASSPLFCSP) traverse the membrane as a helical segment. Topologically, residues 314-361 (EWPRKLVSYCPRRLQQLLPLKAAPQPSVSCVYKRSRGKSGQKPGLRHQ) are cytoplasmic. A helical transmembrane segment spans residues 362–382 (LGAAFTLLYLLEQLFLPYSHF). The Lumenal segment spans residues 383–758 (LTQGYNNWTN…SNPDPVHSEF (376 aa)). Asparagine 459 and asparagine 550 each carry an N-linked (GlcNAc...) asparagine glycan. The tract at residues 732–758 (GELNPSNTDSSHSNPPESNPDPVHSEF) is disordered. The segment covering 735 to 747 (NPSNTDSSHSNPP) has biased composition (polar residues).

This sequence belongs to the vitamin K-dependent gamma-carboxylase family. Monomer. May interact with CALU.

The protein resides in the endoplasmic reticulum membrane. The enzyme catalyses 4-carboxy-L-glutamyl-[protein] + 2,3-epoxyphylloquinone + H2O + H(+) = phylloquinol + L-glutamyl-[protein] + CO2 + O2. Mediates the vitamin K-dependent carboxylation of glutamate residues to calcium-binding gamma-carboxyglutamate (Gla) residues with the concomitant conversion of the reduced hydroquinone form of vitamin K to vitamin K epoxide. Catalyzes gamma-carboxylation of various proteins, such as blood coagulation factors (F2, F7, F9 and F10), osteocalcin (BGLAP) or matrix Gla protein (MGP). This is Vitamin K-dependent gamma-carboxylase (GGCX) from Homo sapiens (Human).